We begin with the raw amino-acid sequence, 1117 residues long: Leucine-rich repeats and immunoglobulin-like domains protein 3 (1117 aa).

The signal sequence occupies residues 1–24; it reads MGAPGLRAATAALGLLLCAGLGRA. Positions 38–74 constitute an LRRNT domain; it reads LLDDDAQRPCPAACHCLGDLLDCSRRRLVRLPDPLPA. LRR repeat units lie at residues 75-98, 99-120, 122-143, 146-168, 169-189, 193-214, 216-237, 240-261, 264-285, 288-309, 312-333, 336-357, 360-382, 387-408, and 411-432; these read WVTR…SHLQ, SLQE…GSIS, NIRQ…QLEA, SLET…PPLQ, LKYL…YFDN, TLLV…MFKL, QLQH…TFQG, ALKS…AFWG, NMEV…WLYG, MLRE…AWEF, KLSE…SFLG, LLNA…AFRG, SLKT…SGAF, RLRQ…AFAG, and TLEH…AFSQ. A glycan (N-linked (GlcNAc...) asparagine) is linked at asparagine 156. A glycan (N-linked (GlcNAc...) asparagine) is linked at asparagine 274. N-linked (GlcNAc...) asparagine glycosylation is found at asparagine 442 and asparagine 469. An LRRCT domain is found at 444–495; that stretch reads SSLLCDCQLRWLPQWVAENNFQSFVNASCAHPQLLKGRSIFTVSPDGFVCDD. Ig-like C2-type domains follow at residues 499–598, 603–692, and 697–783; these read PQIT…AKLT, PSFT…ATLT, and PSFL…VRLS. Cystine bridges form between cysteine 520-cysteine 581 and cysteine 624-cysteine 676. N-linked (GlcNAc...) asparagine glycosylation is found at asparagine 688 and asparagine 729. Cysteine 718 and cysteine 767 are oxidised to a cystine. Residues 810–830 traverse the membrane as a helical segment; that stretch reads VVIIAVVCCVVGTSLVWVVII. N-linked (GlcNAc...) asparagine glycosylation is present at asparagine 1014. A disordered region spans residues 1019-1093; that stretch reads DFSTGPEPGS…KERTDFREEN (75 aa). Over residues 1083-1093 the composition is skewed to basic and acidic residues; sequence DKERTDFREEN.

As to quaternary structure, interacts with EGFR, ERBB2 and ERBB4 (in vitro). Widely expressed.

It is found in the cell membrane. It localises to the cytoplasmic vesicle membrane. Plays a role in craniofacial and inner ear morphogenesis during embryonic development. Acts within the otic vesicle epithelium to control formation of the lateral semicircular canal in the inner ear, possibly by restricting the expression of NTN1. This Mus musculus (Mouse) protein is Leucine-rich repeats and immunoglobulin-like domains protein 3 (Lrig3).